The primary structure comprises 289 residues: Pantothenate synthetase (289 aa).

An ATP-binding site is contributed by 30–37; that stretch reads MGYLHKGH. H37 acts as the Proton donor in catalysis. Residue Q61 coordinates (R)-pantoate. Residue Q61 coordinates beta-alanine. 147-150 is an ATP binding site; the sequence is GEKD. Residue Q153 participates in (R)-pantoate binding. Residues V176 and 184–187 contribute to the ATP site; that span reads CSSR.

The protein belongs to the pantothenate synthetase family. Homodimer.

It localises to the cytoplasm. It carries out the reaction (R)-pantoate + beta-alanine + ATP = (R)-pantothenate + AMP + diphosphate + H(+). It participates in cofactor biosynthesis; (R)-pantothenate biosynthesis; (R)-pantothenate from (R)-pantoate and beta-alanine: step 1/1. In terms of biological role, catalyzes the condensation of pantoate with beta-alanine in an ATP-dependent reaction via a pantoyl-adenylate intermediate. The sequence is that of Pantothenate synthetase from Allorhizobium ampelinum (strain ATCC BAA-846 / DSM 112012 / S4) (Agrobacterium vitis (strain S4)).